The sequence spans 249 residues: Ditrans,polycis-undecaprenyl-diphosphate synthase ((2E,6E)-farnesyl-diphosphate specific) (249 aa).

The active site involves Asp29. Mg(2+) is bound at residue Asp29. Residues 30-33 (GNGR), Trp34, Arg42, His46, and 74-76 (STE) contribute to the substrate site. Catalysis depends on Asn77, which acts as the Proton acceptor. Residues Trp78, Arg80, Arg197, and 203 to 205 (RLS) each bind substrate. Glu216 lines the Mg(2+) pocket.

This sequence belongs to the UPP synthase family. In terms of assembly, homodimer. Mg(2+) serves as cofactor.

It carries out the reaction 8 isopentenyl diphosphate + (2E,6E)-farnesyl diphosphate = di-trans,octa-cis-undecaprenyl diphosphate + 8 diphosphate. In terms of biological role, generates ditrans,octacis-undecaprenyl pyrophosphate (UPP) from isopentenyl pyrophosphate (IPP) and farnesyl diphosphate. UPP is the precursor of glycosyl carrier lipid in the biosynthesis of bacterial cell wall polysaccharide components such as peptidoglycan and lipopolysaccharide. In Micrococcus luteus (Micrococcus lysodeikticus), this protein is Ditrans,polycis-undecaprenyl-diphosphate synthase ((2E,6E)-farnesyl-diphosphate specific) (uppS).